A 168-amino-acid chain; its full sequence is Protein-export protein SecB (168 aa).

The span at 1–10 (MSDQGTNNGE) shows a compositional bias: polar residues. Positions 1–22 (MSDQGTNNGESGNGGAQNGEAP) are disordered.

This sequence belongs to the SecB family. In terms of assembly, homotetramer, a dimer of dimers. One homotetramer interacts with 1 SecA dimer.

The protein resides in the cytoplasm. In terms of biological role, one of the proteins required for the normal export of preproteins out of the cell cytoplasm. It is a molecular chaperone that binds to a subset of precursor proteins, maintaining them in a translocation-competent state. It also specifically binds to its receptor SecA. This Parvibaculum lavamentivorans (strain DS-1 / DSM 13023 / NCIMB 13966) protein is Protein-export protein SecB.